Consider the following 414-residue polypeptide: Serine hydroxymethyltransferase (414 aa).

Residues L118 and 122–124 contribute to the (6S)-5,6,7,8-tetrahydrofolate site; that span reads GHL. The residue at position 226 (K226) is an N6-(pyridoxal phosphate)lysine. Residue 353–355 coordinates (6S)-5,6,7,8-tetrahydrofolate; that stretch reads SPF.

This sequence belongs to the SHMT family. As to quaternary structure, homodimer. Pyridoxal 5'-phosphate serves as cofactor.

The protein localises to the cytoplasm. The catalysed reaction is (6R)-5,10-methylene-5,6,7,8-tetrahydrofolate + glycine + H2O = (6S)-5,6,7,8-tetrahydrofolate + L-serine. Its pathway is one-carbon metabolism; tetrahydrofolate interconversion. The protein operates within amino-acid biosynthesis; glycine biosynthesis; glycine from L-serine: step 1/1. Its function is as follows. Catalyzes the reversible interconversion of serine and glycine with tetrahydrofolate (THF) serving as the one-carbon carrier. This reaction serves as the major source of one-carbon groups required for the biosynthesis of purines, thymidylate, methionine, and other important biomolecules. Also exhibits THF-independent aldolase activity toward beta-hydroxyamino acids, producing glycine and aldehydes, via a retro-aldol mechanism. The sequence is that of Serine hydroxymethyltransferase from Blochmanniella floridana.